The primary structure comprises 504 residues: Acetyltransferase pyiB (504 aa).

An N-terminal signal peptide occupies residues 1-18; the sequence is MGFLSAGGLWASLFRARI. A glycan (N-linked (GlcNAc...) asparagine) is linked at Asn-84. Catalysis depends on His-181, which acts as the Proton acceptor. Asn-413 and Asn-467 each carry an N-linked (GlcNAc...) asparagine glycan.

Belongs to the plant acyltransferase family.

Its pathway is mycotoxin biosynthesis. Acetyltransferase; part of the gene cluster that mediates the biosynthesis of the mycotoxin pyrichalasin H, a tyrosine-derived cytochalasan that inhibits the growth of rice seedlings, but also inhibits lymphocyte capping and actin polymerization and alters cell morphology. Pyrichalasin H is indicated as the responsible agent for the genus-specific pathogenicity of M.grisea toward crabgrass. The first step in the pathway is catalyzed by the O-methyltransferase pyiA which methylates free tyrosine to generate the precursor O-methyltyrosine. The hybrid PKS-NRPS pyiS, assisted by the enoyl reductase pyiC, are responsible for fusion of the O-methyltyrosine precursor and the polyketide backbone. The polyketide synthase module (PKS) of pyiS is responsible for the synthesis of the polyketide backbone and the downstream nonribosomal peptide synthetase (NRPS) amidates the carboxyl end of the polyketide with the O-methyltyrosine precursor. As the NRPS A-domain demonstrates substrate tolerance, pyiS can also use phenylalanine, tyrosine and even para-chlorophenylalanine as amino acid precursor, which leads to the production of novel cytochalasans, including halogenated cytochalasans. Because pyiS lacks a designated enoylreductase (ER) domain, the required activity is provided the enoyl reductase pyiC. Reduction by the hydrolyase pyiE leads to 1,5-dihydropyrrolone, which is substrate for dehydration and intra-molecular Diels-Alder cyclization by the Diels-Alderase pyiF to yield the required isoindolone-fused macrocycle. The tailoring cytochrome P450 monooxygenases piyD and piyG catalyze the hydroxylation at C-18 and C-7, respectivily, whereas the short-chain dehydrogenase/reductase pyiH reduces the carbonyl at C-21 in preparation for the transfer of an acetyl group by the acetyltransferase pyiB. These 3 reactions whose order is not clear yet, lead to the production of O-methylpyrichalasin J, a deacetylated pyrichalasin H. Finally, pyiB to converts O-methylpyrichalasin J into the final product pyrichalasin H via acetylation of C-21. The chain is Acetyltransferase pyiB from Pyricularia grisea (Crabgrass-specific blast fungus).